Here is a 278-residue protein sequence, read N- to C-terminus: Glutamate racemase (278 aa).

Substrate contacts are provided by residues Asp13–Ser14 and Tyr45–Gly46. Cys76 functions as the Proton donor/acceptor in the catalytic mechanism. Position 77–78 (Asn77–Thr78) interacts with substrate. Cys185 acts as the Proton donor/acceptor in catalysis. Substrate is bound at residue Thr186 to His187.

Belongs to the aspartate/glutamate racemases family.

The enzyme catalyses L-glutamate = D-glutamate. It functions in the pathway cell wall biogenesis; peptidoglycan biosynthesis. Functionally, provides the (R)-glutamate required for cell wall biosynthesis. The sequence is that of Glutamate racemase from Gloeothece citriformis (strain PCC 7424) (Cyanothece sp. (strain PCC 7424)).